The sequence spans 975 residues: Homeobox protein cut-like 1 (975 aa).

Positions 1 to 73 (SRQVKEQLIK…ILALRSIQGR (73 aa)) form a DNA-binding region, CUT 1. Disordered regions lie at residues 90-113 (PKRR…GSDE) and 126-148 (LQVQ…TSDD). Positions 113-169 (EAIKSILEQAKRELQVQKTAEPAQPSSTSSSGTSDDAIRSILQQARREMEAQQAALD) form a coiled coil. Ser-207 bears the Phosphoserine mark. Residues 209–246 (KKPPTAPDTSASTLPNPPALKKESQDAPGLDLPGAAES) are disordered. Glycyl lysine isopeptide (Lys-Gly) (interchain with G-Cter in SUMO2) cross-links involve residues Lys-229, Lys-255, and Lys-286. Over residues 262–297 (GVWKDHWWSTVQPERKSAAPPEDAKSEEAGGTKEKG) the composition is skewed to basic and acidic residues. The tract at residues 262-369 (GVWKDHWWST…SKPAKPSVPP (108 aa)) is disordered. Residues 328–351 (RTPQSSELSLTGASRSETPQNSPL) show a composition bias toward polar residues. Ser-349 bears the Phosphoserine mark. The segment at residues 374–461 (QYEIYMYQEV…QGVLPVQGQQ (88 aa)) is a DNA-binding region (CUT 2). Positions 476–489 (LQQGCVSSESTPKT) are enriched in polar residues. The segment at 476–549 (LQQGCVSSES…SQPATPLPLS (74 aa)) is disordered. Residues 490–506 (SASCSPAPESPMSSSES) are compositionally biased toward low complexity. Phosphoserine occurs at positions 499 and 509. Residues 557-644 (QELVAMSPEL…VEKLMDMKRM (88 aa)) constitute a DNA-binding region (CUT 3). The tract at residues 652–687 (RRHSSVSDSQPCEPPSVGIDYSQGASPQPQHQLKKP) is disordered. The homeobox DNA-binding region spans 684-743 (LKKPRVVLAPEEKEALKRAYQQKPYPSPKTIEELATQLNLKTSTVINWFHNYRSRIRREL). Position 710 is a phosphoserine (Ser-710). A Glycyl lysine isopeptide (Lys-Gly) (interchain with G-Cter in SUMO2) cross-link involves residue Lys-724. The tract at residues 752–949 (SQGQAGARHS…DSRDNPLRKK (198 aa)) is disordered. Positions 756–773 (AGARHSPSARSSGAAPSS) are enriched in low complexity. At Ser-777 the chain carries Phosphoserine. Residues 780–813 (GVEAAEGPGAADAEESAPAAAAKSQGGPAEAAVA) show a composition bias toward low complexity. A compositionally biased stretch (gly residues) spans 838–847 (PGRRGGGGPA). Over residues 850–860 (APAAPAAAARG) the composition is skewed to low complexity. A compositionally biased stretch (basic residues) spans 861–890 (PSRRPGARAKPRRRRRRRRRHARGGGRRYL). Positions 907-929 (RSSALPSTSAPAAARRPSSLQSL) are enriched in low complexity. Position 925 is a phosphoserine (Ser-925). Residues 937-946 (GARDSRDNPL) are compositionally biased toward basic and acidic residues. A phosphoserine mark is found at Ser-956 and Ser-966.

Belongs to the CUT homeobox family. As to quaternary structure, interacts with BANP. In terms of processing, as cells progress into S phase, a fraction of CUX1 molecules is proteolytically processed into N-terminally truncated proteins of 110 kDa by CTSL. Cell cycle-dependent processing of CUX1 serves to generate a CDP/Cux p110 with distinct DNA binding and transcriptional properties. Post-translationally, phosphorylated by PKA. In terms of tissue distribution, a broad pattern of expression observed in tissues of diverse origins, such as cartilage, liver, brain, lung, heart and skeletal muscle. There are 2 distinct protein species: the larger one (230-250 kDa) is found mainly in adult brain, lung and heart, and the smaller one (180-190 kDa) predominates in early embryonic tissues.

It is found in the nucleus. Transcription factor involved in the control of neuronal differentiation in the brain. Regulates dendrite development and branching, and dendritic spine formation in cortical layers II-III. Also involved in the control of synaptogenesis. In addition, it has probably a broad role in mammalian development as a repressor of developmentally regulated gene expression. May act by preventing binding of positively-activing CCAAT factors to promoters. Component of nf-munr repressor; binds to the matrix attachment regions (MARs) (5' and 3') of the immunoglobulin heavy chain enhancer. Represses T-cell receptor (TCR) beta enhancer function by binding to MARbeta, an ATC-rich DNA sequence located upstream of the TCR beta enhancer. Binds to the TH enhancer; may require the basic helix-loop-helix protein TCF4 as a coactivator. In terms of biological role, plays a role in cell cycle progression, in particular at the G1/S transition. As cells progress into S phase, a fraction of CUX1 molecules is proteolytically processed into N-terminally truncated proteins of 110 kDa. While CUX1 only transiently binds to DNA and carries the CCAAT-displacement activity, CDP/Cux p110 makes a stable interaction with DNA and stimulates expression of genes such as POLA1. This chain is Homeobox protein cut-like 1 (CUX1), found in Canis lupus familiaris (Dog).